Reading from the N-terminus, the 378-residue chain is Packaging protein 3 (378 aa).

Disordered stretches follow at residues 1–73 (MHPV…EGPV) and 355–378 (SRPP…DDFI). Positions 1–178 (MHPVLQSVRN…AFGEELRNTC (178 aa)) are interaction with packaging protein 1. 2 stretches are compositionally biased toward low complexity: residues 16 to 35 (GGPH…SVRR) and 49 to 58 (PGAGATPTAG). S362 is modified (phosphoserine; by host). The span at 363–378 (FADEGPSESDDEDDFI) shows a compositional bias: acidic residues.

It belongs to the adenoviridae packaging protein 3 family. As to quaternary structure, part of the genome packaging complex composed of packaging proteins 1, 2 and 3; this complex specifically binds to the packaging sequence on the left end of viral genomic DNA and performs packaging of the viral genome. Interacts with hexon-linking protein IIIa; this interaction is required to promote correct genome packaging. In terms of processing, cleaved at different sites by the viral protease during virion maturation.

The protein localises to the host nucleus. Functionally, involved in viral genome packaging through its interaction with packaging proteins 1 and 2. After proteolytic cleavage by adenovirus protease, L1 52/55k protein is removed from the capsid during viral maturation. This is Packaging protein 3 from Galliformes (FAdV-1).